We begin with the raw amino-acid sequence, 596 residues long: Cysteine--tRNA ligase (596 aa).

Positions 1-199 are unknown; it reads MKSKTFLEKN…SQRYFEELRK (199 aa). Zn(2+) is bound at residue Cys-212. The 'HIGH' region signature appears at 214-224; that stretch reads PTVYDEVHIGN. Zn(2+) contacts are provided by Cys-377, His-403, and Glu-407. Residues 435–439 carry the 'KMSKS' region motif; sequence KMSKS. Lys-438 is an ATP binding site.

This sequence belongs to the class-I aminoacyl-tRNA synthetase family. In terms of assembly, monomer. It depends on Zn(2+) as a cofactor.

It localises to the cytoplasm. The catalysed reaction is tRNA(Cys) + L-cysteine + ATP = L-cysteinyl-tRNA(Cys) + AMP + diphosphate. This chain is Cysteine--tRNA ligase (cysS), found in Mycoplasmopsis pulmonis (strain UAB CTIP) (Mycoplasma pulmonis).